Consider the following 931-residue polypeptide: Transportin (931 aa).

HEAT repeat units lie at residues 10–37 (GLKQ…EELD), 42–79 (VPDY…QYFE), 88–121 (YIKR…KSCF), 127–164 (LLPA…LDSD), 171–201 (NQLI…YFII), 214–241 (FLKG…VTLV), 253–280 (KDVI…FWTA), 296–421 (PVLV…LSGI), 430–459 (VTLP…GAIA), 471–498 (SKVI…TLSR), 512–545 (LHPL…EEEA), 553–586 (LQMI…AKVV), 594–632 (ELIN…SSIG), 640–693 (SLFF…GIGT), 704–735 (LPHL…KFCL), 743–776 (PDYL…IRMP), 784–819 (VAIR…IVSP), 827–860 (DKFI…INNN), and 869–900 (VYIC…KTSM). The Importin N-terminal domain occupies 32-99 (IREELDKFHS…KREILPVLSD (68 aa)). A disordered region spans residues 317 to 401 (DQGDDSMTPD…DDDDDDDGFE (85 aa)). Positions 358–381 (DNNNNSNNNNSSNNNSSNNNNNNN) are enriched in low complexity. Over residues 382 to 401 (NEDDEEYNDDDDDDDDDGFE) the composition is skewed to acidic residues.

Belongs to the importin beta family. Importin beta-2 subfamily. In terms of assembly, forms a complex with an importin alpha subunit.

The protein localises to the cytoplasm. The protein resides in the nucleus envelope. Functions in nuclear protein import via a substrate-importin alpha-beta transport complex that passes though the nuclear pore complexes (NPC). Mediates docking of the substrate-importin complex to distinct nucleoporins. The protein is Transportin (tnpo) of Dictyostelium discoideum (Social amoeba).